We begin with the raw amino-acid sequence, 301 residues long: Phosphatidylglycerol--prolipoprotein diacylglyceryl transferase (301 aa).

The next 3 membrane-spanning stretches (helical) occupy residues 17–37 (LAVRWYGLMYLVAFIAAIVVG), 59–79 (MLFYGVLGTILGGRLGYVLFY), and 97–117 (GGMSFHGGFLGVTLAMVLFAY). Arg-142 is a binding site for a 1,2-diacyl-sn-glycero-3-phospho-(1'-sn-glycerol). The next 2 membrane-spanning stretches (helical) occupy residues 230–250 (MGAISAVFLIGYGLARFTVEF) and 265–285 (LSMGQWLSLPMILVGIGLLVW).

The protein belongs to the Lgt family.

The protein localises to the cell inner membrane. The enzyme catalyses L-cysteinyl-[prolipoprotein] + a 1,2-diacyl-sn-glycero-3-phospho-(1'-sn-glycerol) = an S-1,2-diacyl-sn-glyceryl-L-cysteinyl-[prolipoprotein] + sn-glycerol 1-phosphate + H(+). The protein operates within protein modification; lipoprotein biosynthesis (diacylglyceryl transfer). In terms of biological role, catalyzes the transfer of the diacylglyceryl group from phosphatidylglycerol to the sulfhydryl group of the N-terminal cysteine of a prolipoprotein, the first step in the formation of mature lipoproteins. This is Phosphatidylglycerol--prolipoprotein diacylglyceryl transferase from Paraburkholderia xenovorans (strain LB400).